The chain runs to 181 residues: ATP-dependent protease subunit HslV (181 aa).

Residue Thr-8 is part of the active site. Positions 165, 168, and 171 each coordinate Na(+).

This sequence belongs to the peptidase T1B family. HslV subfamily. A double ring-shaped homohexamer of HslV is capped on each side by a ring-shaped HslU homohexamer. The assembly of the HslU/HslV complex is dependent on binding of ATP.

The protein localises to the cytoplasm. The enzyme catalyses ATP-dependent cleavage of peptide bonds with broad specificity.. With respect to regulation, allosterically activated by HslU binding. In terms of biological role, protease subunit of a proteasome-like degradation complex believed to be a general protein degrading machinery. The protein is ATP-dependent protease subunit HslV of Oceanobacillus iheyensis (strain DSM 14371 / CIP 107618 / JCM 11309 / KCTC 3954 / HTE831).